Here is a 776-residue protein sequence, read N- to C-terminus: Mitochondrial intermediate peptidase (776 aa).

The N-terminal 38 residues, 1-38, are a transit peptide targeting the mitochondrion; it reads MLNSARTVLARHSARQLYRFRGCLVHQQRHRHQVQRTL. Histidine 560 provides a ligand contact to Zn(2+). Glutamate 561 is an active-site residue. Zn(2+) contacts are provided by histidine 564 and histidine 567.

Belongs to the peptidase M3 family. Zn(2+) is required as a cofactor.

The protein localises to the mitochondrion matrix. The catalysed reaction is Release of an N-terminal octapeptide as second stage of processing of some proteins imported into the mitochondrion.. Its function is as follows. Cleaves proteins, imported into the mitochondrion, to their mature size. While most mitochondrial precursor proteins are processed to the mature form in one step by mitochondrial processing peptidase (MPP), the sequential cleavage by MIP of an octapeptide after initial processing by MPP is a required step for a subgroup of nuclear-encoded precursor proteins destined for the matrix or the inner membrane. The polypeptide is Mitochondrial intermediate peptidase (OCT1) (Coprinopsis cinerea (strain Okayama-7 / 130 / ATCC MYA-4618 / FGSC 9003) (Inky cap fungus)).